Here is a 192-residue protein sequence, read N- to C-terminus: Calcium-binding protein K (192 aa).

EF-hand domains are found at residues 60–95 (WDEA…MAKA) and 96–131 (PTLD…VVCC). 9 residues coordinate Ca(2+): D73, D75, N77, E84, D109, D111, S113, Y115, and E120.

The protein belongs to the recoverin family.

The sequence is that of Calcium-binding protein K (cbpK) from Dictyostelium discoideum (Social amoeba).